The following is a 430-amino-acid chain: Tapasin (430 aa).

The first 15 residues, 1 to 15, serve as a signal peptide directing secretion; sequence MAAGLRLLLAGLCWS. At 16 to 399 the chain is on the lumenal side; the sequence is QFRVEDAASP…TEGPHLEDIT (384 aa). A disulfide bridge connects residues Cys-34 and Cys-99. Positions 61-128 are disordered; it reads GDAETPPEPG…PDARSPPTAG (68 aa). A glycan (N-linked (GlcNAc...) asparagine) is linked at Asn-78. A compositionally biased stretch (polar residues) spans 101–111; it reads LNPTNPQTGSD. Ig-like C1-type domains follow at residues 139–273 and 278–382; these read PQYG…LQLH and PKVT…MRVS. Cys-299 and Cys-368 form a disulfide bridge. The tract at residues 316-342 is disordered; it reads RAGGSGTSQSPRDTVMDSWTSGHRQAA. A compositionally biased stretch (polar residues) spans 322–338; that stretch reads TSQSPRDTVMDSWTSGH. The helical transmembrane segment at 400–417 threads the bilayer; sequence GLFLVAFVLCGLIRWLYP. The Cytoplasmic portion of the chain corresponds to 418-430; the sequence is KAARPKEETKKSQ.

As to quaternary structure, interacts with TAP1 and is thus a subunit of the TAP complex. Interaction with TAP1 is TAP2 independent and is required for efficient peptide-TAP interaction. Obligatory mediator for the interaction between newly assembled MHC class I molecules, calreticulin, ERp57 and TAP. Up to 4 MHC class I/tapasin complexes bind to 1 TAP.

It is found in the endoplasmic reticulum membrane. Involved in the association of MHC class I with transporter associated with antigen processing (TAP) and in the assembly of MHC class I with peptide (peptide loading). The protein is Tapasin (TAPBP) of Gallus gallus (Chicken).